The chain runs to 426 residues: Glucose-6-phosphate isomerase (426 aa).

The active-site Proton donor is the glutamate 282. Catalysis depends on residues histidine 303 and lysine 419.

The protein belongs to the GPI family.

It localises to the cytoplasm. It carries out the reaction alpha-D-glucose 6-phosphate = beta-D-fructose 6-phosphate. It participates in carbohydrate biosynthesis; gluconeogenesis. Its pathway is carbohydrate degradation; glycolysis; D-glyceraldehyde 3-phosphate and glycerone phosphate from D-glucose: step 2/4. In terms of biological role, catalyzes the reversible isomerization of glucose-6-phosphate to fructose-6-phosphate. This is Glucose-6-phosphate isomerase from Mycoplasmoides gallisepticum (strain R(low / passage 15 / clone 2)) (Mycoplasma gallisepticum).